We begin with the raw amino-acid sequence, 151 residues long: 3-hydroxyacyl-[acyl-carrier-protein] dehydratase FabZ (151 aa).

The active site involves H54.

Belongs to the thioester dehydratase family. FabZ subfamily.

It is found in the cytoplasm. It carries out the reaction a (3R)-hydroxyacyl-[ACP] = a (2E)-enoyl-[ACP] + H2O. Its function is as follows. Involved in unsaturated fatty acids biosynthesis. Catalyzes the dehydration of short chain beta-hydroxyacyl-ACPs and long chain saturated and unsaturated beta-hydroxyacyl-ACPs. This Buchnera aphidicola subsp. Acyrthosiphon pisum (strain 5A) protein is 3-hydroxyacyl-[acyl-carrier-protein] dehydratase FabZ.